The chain runs to 244 residues: Ubiquitin carboxyl-terminal hydrolase mug105 (244 aa).

The active-site Nucleophile is cysteine 42. Histidine 165 acts as the Proton acceptor in catalysis. The active site involves aspartate 183.

It belongs to the peptidase C78 family. ZUFSP subfamily.

It localises to the cytoplasm. It catalyses the reaction Thiol-dependent hydrolysis of ester, thioester, amide, peptide and isopeptide bonds formed by the C-terminal Gly of ubiquitin (a 76-residue protein attached to proteins as an intracellular targeting signal).. Functionally, deubiquitinase with endodeubiquitinase activity that preferentially cleaves 'Lys-48'-linked polyubiquitin chains. Shows only weak activity against 'Lys-63' and 'Lys-11'-linked chains. Has a role in meiosis. This chain is Ubiquitin carboxyl-terminal hydrolase mug105 (mug105), found in Schizosaccharomyces pombe (strain 972 / ATCC 24843) (Fission yeast).